Reading from the N-terminus, the 323-residue chain is Putative dTDP-D-glucose 4,6-dehydratase (323 aa).

Thr-124 contributes to the substrate binding site. Asp-125 acts as the Proton donor in catalysis. Catalysis depends on proton acceptor residues Glu-126 and Tyr-149.

It belongs to the NAD(P)-dependent epimerase/dehydratase family. dTDP-glucose dehydratase subfamily. The cofactor is NAD(+).

It catalyses the reaction dTDP-alpha-D-glucose = dTDP-4-dehydro-6-deoxy-alpha-D-glucose + H2O. The protein is Putative dTDP-D-glucose 4,6-dehydratase of Acanthamoeba polyphaga mimivirus (APMV).